Here is a 288-residue protein sequence, read N- to C-terminus: Probable aquaporin PIP2-2 (288 aa).

Residues 1–21 (MAKDIEASAPEGGEFSAKDYT) form a disordered region. 2 helical membrane passes run 42–62 (AVIAEFIATLLFLYITVATVI) and 81–101 (GVGILGIAWAFGGMIFILVYC). The short motif at 111 to 113 (NPA) is the NPA 1 element. 3 consecutive transmembrane segments (helical) span residues 130 to 150 (VLYIIAQCLGAICGVGLVKGF), 172 to 192 (GTGLGAEIIGTFVLVYTVFSA), and 204 to 224 (IPVLAPLPIGFAVFMVHLATI). The NPA 2 signature appears at 232–234 (NPA). A helical transmembrane segment spans residues 254–274 (IFWVGPLIGAAIAAAYHQYVL).

Belongs to the MIP/aquaporin (TC 1.A.8) family. PIP (TC 1.A.8.11) subfamily. As to expression, expressed in roots, leaves and anthers.

It is found in the cell membrane. Its function is as follows. Aquaporins facilitate the transport of water and small neutral solutes across cell membranes. The protein is Probable aquaporin PIP2-2 (PIP2-2) of Oryza sativa subsp. japonica (Rice).